We begin with the raw amino-acid sequence, 423 residues long: Carboxypeptidase B2 (423 aa).

Positions 1–22 (MKLCSLAVLVPIVLFCEQHVFA) are cleaved as a signal peptide. Residues 23–114 (FQSGQVLAAL…QISNDTVSPR (92 aa)) constitute a propeptide, activation peptide. 3 N-linked (GlcNAc...) asparagine glycosylation sites follow: asparagine 44, asparagine 73, and asparagine 85. Asparagine 108 carries an N-linked (GlcNAc...) (complex) asparagine glycan. The Peptidase M14 domain occupies 122–419 (QYHSLNEIYS…AAVSKIAWHV (298 aa)). Cysteine 178 and cysteine 191 are joined by a disulfide. The Zn(2+) site is built by histidine 181 and glutamate 184. Residues 181–184 (HARE) and arginine 239 contribute to the substrate site. N-linked (GlcNAc...) asparagine; partial glycosylation is present at asparagine 241. 2 cysteine pairs are disulfide-bonded: cysteine 250–cysteine 274 and cysteine 265–cysteine 279. 256-257 (NR) provides a ligand contact to substrate. Histidine 310 contacts Zn(2+). Substrate is bound by residues 311 to 312 (SY) and tyrosine 363. Residue glutamate 385 is the Proton donor/acceptor of the active site.

Belongs to the peptidase M14 family. Zn(2+) serves as cofactor. Post-translationally, N-glycosylated. N-glycan at Asn-108: Hex5HexNAc4. As to expression, plasma; synthesized in the liver.

Its subcellular location is the secreted. The catalysed reaction is Release of C-terminal Arg and Lys from a polypeptide.. With respect to regulation, TAFI/CPB2 is unique among carboxypeptidases in that it spontaneously inactivates with a short half-life, a property that is crucial for its role in controlling blood clot lysis. The zymogen is stabilized by interactions with the activation peptide. Release of the activation peptide increases a dynamic flap mobility and in time this leads to conformational changes that disrupt the catalytic site and expose a cryptic thrombin-cleavage site present at Arg-324. Cleaves C-terminal arginine or lysine residues from biologically active peptides such as kinins or anaphylatoxins in the circulation thereby regulating their activities. Down-regulates fibrinolysis by removing C-terminal lysine residues from fibrin that has already been partially degraded by plasmin. This chain is Carboxypeptidase B2 (CPB2), found in Homo sapiens (Human).